A 237-amino-acid polypeptide reads, in one-letter code: Orotidine 5'-phosphate decarboxylase (237 aa).

Residues Asp10, Lys33, 60-69 (DLKLHDIPNT), Thr123, Arg185, Gln194, Gly214, and Arg215 each bind substrate. The active-site Proton donor is Lys62.

Belongs to the OMP decarboxylase family. Type 1 subfamily. As to quaternary structure, homodimer.

It carries out the reaction orotidine 5'-phosphate + H(+) = UMP + CO2. Its pathway is pyrimidine metabolism; UMP biosynthesis via de novo pathway; UMP from orotate: step 2/2. Catalyzes the decarboxylation of orotidine 5'-monophosphate (OMP) to uridine 5'-monophosphate (UMP). The sequence is that of Orotidine 5'-phosphate decarboxylase from Enterococcus faecalis (strain ATCC 700802 / V583).